Consider the following 299-residue polypeptide: MSQVQSGILPEHCRAAIWIEANVKGEVDALRAASKTFADKLATFEAKFPDAHLGAVVAFGNNIWRALSGGVGAEELKDFPGYGKGLAPTTQFDVLIHILSLRHDVNFSVAQAAMEAFGDCIEVKEEIHGFRWVEERDLSGFVDGTENPAGEETRREVAVIKDGVDAGGSYVFVQRWEHNLKQLNRMSVHDQEMMIGRTKEANEEIDGDERPETSHLTRVDLKEDGKGLKIVRQSLPYGTASGTHGLYFCAYCARLHNIEQQLLSMFGDTDGKRDAMLRFTKPVTGGYYFAPSLDKLMAL.

His-215 provides a ligand contact to heme.

This sequence belongs to the DyP-type peroxidase family. Heme b serves as cofactor.

Its subcellular location is the cytoplasm. Has both general peroxidase activity and dye-decolorizing activity. Can catalyze the oxidation of 2,2'-azino-bis(3-ethylbenzothiazoline-6-sulphonic acid) (ABTS), and the phenolic compounds guaiacol and catechol. Also decolorizes the anthraquinone dye reactive blue 19 (RB19). The protein is Dye-decolorizing peroxidase YfeX of Escherichia coli O157:H7.